An 805-amino-acid chain; its full sequence is Ubiquitin carboxyl-terminal hydrolase 10 (805 aa).

Residues D139–Y170 form a disordered region. Over residues N143 to G153 the composition is skewed to polar residues. A USP domain is found at R422–V802. The Nucleophile role is filled by C431. Residues H561–R593 are disordered. The segment covering V569–Q580 has biased composition (basic and acidic residues). H756 functions as the Proton acceptor in the catalytic mechanism.

The protein belongs to the peptidase C19 family. USP10 subfamily.

It localises to the cytoplasm. The protein resides in the nucleus. It catalyses the reaction Thiol-dependent hydrolysis of ester, thioester, amide, peptide and isopeptide bonds formed by the C-terminal Gly of ubiquitin (a 76-residue protein attached to proteins as an intracellular targeting signal).. Its function is as follows. Hydrolase that can remove conjugated ubiquitin from target proteins such as p53/tp53, rps2/us5, rps3/us3, rps10/eS10, becn1, snx3 and cftr. Acts as an essential regulator of p53/tp53 stability: in unstressed cells, specifically deubiquitinates p53/tp53 in the cytoplasm, leading to counteracts MDM2 action and stabilize p53/tp53. Following DNA damage, translocates to the nucleus and deubiquitinates p53/tp53, leading to regulate the p53/TP53-dependent DNA damage response. Component of a regulatory loop that controls autophagy and p53/tp53 levels. Plays a key role in 40S ribosome subunit recycling when a ribosome has stalled during translation: acts both by inhibiting formation of stress granules, which store stalled translation pre-initiation complexes, and mediating deubiquitination of 40S ribosome subunits. Deubiquitinates cftr in early endosomes, enhancing its endocytic recycling. The chain is Ubiquitin carboxyl-terminal hydrolase 10 (usp10) from Xenopus tropicalis (Western clawed frog).